Reading from the N-terminus, the 184-residue chain is Photosystem I assembly protein Ycf4 (184 aa).

2 helical membrane-spanning segments follow: residues 20–42 (VNLC…GFSS) and 57–79 (IAFI…LGLY).

It belongs to the Ycf4 family.

It localises to the plastid. Its subcellular location is the chloroplast thylakoid membrane. Seems to be required for the assembly of the photosystem I complex. The polypeptide is Photosystem I assembly protein Ycf4 (Adiantum capillus-veneris (Maidenhair fern)).